Here is a 90-residue protein sequence, read N- to C-terminus: Small ribosomal subunit protein uS15c (90 aa).

Belongs to the universal ribosomal protein uS15 family. As to quaternary structure, part of the 30S ribosomal subunit.

The protein localises to the plastid. Its subcellular location is the chloroplast. This chain is Small ribosomal subunit protein uS15c (rps15), found in Mesostigma viride (Green alga).